We begin with the raw amino-acid sequence, 181 residues long: Ribosome maturation factor RimP (181 aa).

It belongs to the RimP family.

Its subcellular location is the cytoplasm. Required for maturation of 30S ribosomal subunits. The sequence is that of Ribosome maturation factor RimP from Mycolicibacterium smegmatis (strain ATCC 700084 / mc(2)155) (Mycobacterium smegmatis).